The following is a 103-amino-acid chain: Small ribosomal subunit protein uS10 (103 aa).

It belongs to the universal ribosomal protein uS10 family. As to quaternary structure, part of the 30S ribosomal subunit.

Functionally, involved in the binding of tRNA to the ribosomes. This chain is Small ribosomal subunit protein uS10, found in Campylobacter fetus subsp. fetus (strain 82-40).